A 173-amino-acid chain; its full sequence is C-phycocyanin beta subunit (173 aa).

N73 bears the N4-methylasparagine mark. The (2R,3E)-phycocyanobilin site is built by C83 and C154.

The protein belongs to the phycobiliprotein family. As to quaternary structure, heterodimer of an alpha and a beta subunit, which further assembles into trimers and the trimers into hexamers. Post-translationally, contains two covalently linked bilin chromophores.

Its subcellular location is the cellular thylakoid membrane. Its function is as follows. Light-harvesting photosynthetic bile pigment-protein from the phycobiliprotein complex (phycobilisome, PBS). Phycocyanin is the major phycobiliprotein in the PBS rod. This Synechococcus elongatus (strain ATCC 33912 / PCC 7942 / FACHB-805) (Anacystis nidulans R2) protein is C-phycocyanin beta subunit (cpcB1).